A 109-amino-acid chain; its full sequence is Large ribosomal subunit protein uL23 (109 aa).

It belongs to the universal ribosomal protein uL23 family. As to quaternary structure, part of the 50S ribosomal subunit. Contacts protein L29, and trigger factor when it is bound to the ribosome.

One of the early assembly proteins it binds 23S rRNA. One of the proteins that surrounds the polypeptide exit tunnel on the outside of the ribosome. Forms the main docking site for trigger factor binding to the ribosome. The protein is Large ribosomal subunit protein uL23 of Prosthecochloris aestuarii (strain DSM 271 / SK 413).